A 396-amino-acid polypeptide reads, in one-letter code: Phosphoglycerate kinase (396 aa).

Residues 21-23 (DFN), R37, 60-63 (HLGR), R121, and R154 contribute to the substrate site. ATP contacts are provided by residues K205, G296, E327, and 353 to 356 (GGDS).

The protein belongs to the phosphoglycerate kinase family. In terms of assembly, monomer.

The protein localises to the cytoplasm. The catalysed reaction is (2R)-3-phosphoglycerate + ATP = (2R)-3-phospho-glyceroyl phosphate + ADP. The protein operates within carbohydrate degradation; glycolysis; pyruvate from D-glyceraldehyde 3-phosphate: step 2/5. The polypeptide is Phosphoglycerate kinase (Anaeromyxobacter sp. (strain Fw109-5)).